The primary structure comprises 375 residues: Queuine tRNA-ribosyltransferase (375 aa).

The active-site Proton acceptor is D89. Substrate-binding positions include D89–F93, D143, Q187, and G214. Residues G245–D251 are RNA binding. Catalysis depends on D264, which acts as the Nucleophile. The interval T269–R273 is RNA binding; important for wobble base 34 recognition. Zn(2+) is bound by residues C302, C304, C307, and H333.

Belongs to the queuine tRNA-ribosyltransferase family. Homodimer. Within each dimer, one monomer is responsible for RNA recognition and catalysis, while the other monomer binds to the replacement base PreQ1. The cofactor is Zn(2+).

It catalyses the reaction 7-aminomethyl-7-carbaguanine + guanosine(34) in tRNA = 7-aminomethyl-7-carbaguanosine(34) in tRNA + guanine. The protein operates within tRNA modification; tRNA-queuosine biosynthesis. Functionally, catalyzes the base-exchange of a guanine (G) residue with the queuine precursor 7-aminomethyl-7-deazaguanine (PreQ1) at position 34 (anticodon wobble position) in tRNAs with GU(N) anticodons (tRNA-Asp, -Asn, -His and -Tyr). Catalysis occurs through a double-displacement mechanism. The nucleophile active site attacks the C1' of nucleotide 34 to detach the guanine base from the RNA, forming a covalent enzyme-RNA intermediate. The proton acceptor active site deprotonates the incoming PreQ1, allowing a nucleophilic attack on the C1' of the ribose to form the product. After dissociation, two additional enzymatic reactions on the tRNA convert PreQ1 to queuine (Q), resulting in the hypermodified nucleoside queuosine (7-(((4,5-cis-dihydroxy-2-cyclopenten-1-yl)amino)methyl)-7-deazaguanosine). In Photobacterium profundum (strain SS9), this protein is Queuine tRNA-ribosyltransferase.